Consider the following 377-residue polypeptide: Carbonic anhydrase 1 (377 aa).

The signal sequence occupies residues 1–20 (MARTGALLLVALALAGCAQA). The Alpha-carbonic anhydrase domain maps to 38–318 (DHWDHGLNGE…HHHRRLLHNH (281 aa)). Disulfide bonds link cysteine 61/cysteine 264, cysteine 194/cysteine 198, and cysteine 296/cysteine 351. A glycan (N-linked (GlcNAc...) asparagine) is linked at asparagine 101. The active-site Proton acceptor is histidine 112. N-linked (GlcNAc...) asparagine glycosylation is present at asparagine 135. Histidine 163, histidine 165, and histidine 182 together coordinate Zn(2+). Substrate-binding positions include threonine 260 and 260 to 261 (TT). Residue asparagine 297 is glycosylated (N-linked (GlcNAc...) asparagine).

This sequence belongs to the alpha-carbonic anhydrase family. As to quaternary structure, tetramer of two large and two small subunits linked by two disulfide bonds. Zn(2+) serves as cofactor.

It localises to the periplasm. It catalyses the reaction hydrogencarbonate + H(+) = CO2 + H2O. Its function is as follows. Reversible hydration of carbon dioxide. The sequence is that of Carbonic anhydrase 1 (CAH1) from Chlamydomonas reinhardtii (Chlamydomonas smithii).